A 620-amino-acid chain; its full sequence is KIF-binding protein (620 aa).

2 coiled-coil regions span residues 30-64 (YKSK…QDIL) and 133-169 (LIKS…QLQN).

The protein belongs to the KIF-binding protein family.

Its subcellular location is the cytoplasm. It localises to the cytoskeleton. Activator of KIF1B plus-end-directed microtubule motor activity. Required for organization of axonal microtubules, and axonal outgrowth and maintenance during peripheral and central nervous system development. In Dictyostelium discoideum (Social amoeba), this protein is KIF-binding protein (kifbp).